Consider the following 423-residue polypeptide: Phosphoribosylamine--glycine ligase (423 aa).

An ATP-grasp domain is found at 107-312 (KAFADRYGLP…LVPYLVACAN (206 aa)). 133–193 (LELFEPPYVI…EEFLEGEIGS (61 aa)) serves as a coordination point for ATP. Mg(2+)-binding residues include Glu270, Glu282, and Asn284. Mn(2+)-binding residues include Glu270, Glu282, and Asn284.

It belongs to the GARS family. Requires Mg(2+) as cofactor. Mn(2+) serves as cofactor.

It carries out the reaction 5-phospho-beta-D-ribosylamine + glycine + ATP = N(1)-(5-phospho-beta-D-ribosyl)glycinamide + ADP + phosphate + H(+). It participates in purine metabolism; IMP biosynthesis via de novo pathway; N(1)-(5-phospho-D-ribosyl)glycinamide from 5-phospho-alpha-D-ribose 1-diphosphate: step 2/2. This Phenylobacterium zucineum (strain HLK1) protein is Phosphoribosylamine--glycine ligase.